A 276-amino-acid chain; its full sequence is GPN-loop GTPase 3 (276 aa).

Residue 13-18 participates in GTP binding; that stretch reads SSGKST. Positions 70 to 72 match the Gly-Pro-Asn (GPN)-loop; involved in dimer interface motif; that stretch reads GPN. 173 to 176 is a GTP binding site; it reads SKMD. The segment at 257–276 is disordered; that stretch reads EDQEPKDPDRFEADDLEDDE. The segment covering 259 to 269 has biased composition (basic and acidic residues); that stretch reads QEPKDPDRFEA.

The protein belongs to the GPN-loop GTPase family. Heterodimers with gpn1 or gpn2. Binds to RNA polymerase II (RNAPII).

Its subcellular location is the cytoplasm. The protein resides in the nucleus. In terms of biological role, small GTPase required for proper nuclear import of RNA polymerase II and III (RNAPII and RNAPIII). May act at an RNAP assembly step prior to nuclear import. The protein is GPN-loop GTPase 3 of Schizosaccharomyces pombe (strain 972 / ATCC 24843) (Fission yeast).